The primary structure comprises 217 residues: Large ribosomal subunit protein uL1 (217 aa).

Belongs to the universal ribosomal protein uL1 family. In terms of assembly, component of the large ribosomal subunit (LSU). Mature N.crassa ribosomes consist of a small (40S) and a large (60S) subunit. The 40S small subunit contains 1 molecule of ribosomal RNA (18S rRNA) and at least 32 different proteins. The large 60S subunit contains 3 rRNA molecules (26S, 5.8S and 5S rRNA) and at least 42 different proteins. uL1 forms part of the L1 stalk.

The protein resides in the cytoplasm. Its function is as follows. Component of the ribosome, a large ribonucleoprotein complex responsible for the synthesis of proteins in the cell. The small ribosomal subunit (SSU) binds messenger RNAs (mRNAs) and translates the encoded message by selecting cognate aminoacyl-transfer RNA (tRNA) molecules. The large subunit (LSU) contains the ribosomal catalytic site termed the peptidyl transferase center (PTC), which catalyzes the formation of peptide bonds, thereby polymerizing the amino acids delivered by tRNAs into a polypeptide chain. The nascent polypeptides leave the ribosome through a tunnel in the LSU and interact with protein factors that function in enzymatic processing, targeting, and the membrane insertion of nascent chains at the exit of the ribosomal tunnel. uL1 forms part of the L1 stalk, a mobile element that plays a role in evacuating the exit-site tRNA. The sequence is that of Large ribosomal subunit protein uL1 (crp-74) from Neurospora crassa (strain ATCC 24698 / 74-OR23-1A / CBS 708.71 / DSM 1257 / FGSC 987).